The following is a 345-amino-acid chain: S-adenosylmethionine:tRNA ribosyltransferase-isomerase (345 aa).

Belongs to the QueA family. As to quaternary structure, monomer.

It is found in the cytoplasm. The enzyme catalyses 7-aminomethyl-7-carbaguanosine(34) in tRNA + S-adenosyl-L-methionine = epoxyqueuosine(34) in tRNA + adenine + L-methionine + 2 H(+). It participates in tRNA modification; tRNA-queuosine biosynthesis. In terms of biological role, transfers and isomerizes the ribose moiety from AdoMet to the 7-aminomethyl group of 7-deazaguanine (preQ1-tRNA) to give epoxyqueuosine (oQ-tRNA). This chain is S-adenosylmethionine:tRNA ribosyltransferase-isomerase, found in Finegoldia magna (strain ATCC 29328 / DSM 20472 / WAL 2508) (Peptostreptococcus magnus).